A 315-amino-acid polypeptide reads, in one-letter code: Putative ankyrin repeat protein R600 (315 aa).

5 ANK repeats span residues 79–108 (NECR…NVHV), 118–152 (SGFG…MVGT), 153–182 (DTCN…DIFS), 184–211 (QSKL…DVTD), and 212–240 (DNNS…DMNT).

The protein is Putative ankyrin repeat protein R600 of Acanthamoeba polyphaga mimivirus (APMV).